The following is a 517-amino-acid chain: GMP synthase [glutamine-hydrolyzing] (517 aa).

In terms of domain architecture, Glutamine amidotransferase type-1 spans 11–202; sequence KIIVLDYGSQ…AFDICKAEAN (192 aa). The Nucleophile role is filled by cysteine 88. Active-site residues include histidine 176 and glutamate 178. The GMPS ATP-PPase domain occupies 203 to 392; sequence WSMDDFITKQ…LGMPHALVWR (190 aa). 230-236 provides a ligand contact to ATP; it reads SGGVDSS.

As to quaternary structure, homodimer.

It carries out the reaction XMP + L-glutamine + ATP + H2O = GMP + L-glutamate + AMP + diphosphate + 2 H(+). It functions in the pathway purine metabolism; GMP biosynthesis; GMP from XMP (L-Gln route): step 1/1. Its function is as follows. Catalyzes the synthesis of GMP from XMP. This Lacticaseibacillus casei (strain BL23) (Lactobacillus casei) protein is GMP synthase [glutamine-hydrolyzing].